A 172-amino-acid polypeptide reads, in one-letter code: MGSDADADLGERRPFPVSWDQFHRDCRALTWRLNEVGPFAAVIAITRGGLVPAAIVARELGLRVIDTICVASYAHDKQGDLQVLKGVSEQTAALGHGTGKGLLIVDDLVDTGKTGRMVRDLLPDAHFATVYAKPMGKPLVDTFITEVSQDTWIFFPWDTGLSFQPPLKDGAA.

Residues 47-48 (RG) and 106-114 (DDLVDTGKT) each bind 5-phospho-alpha-D-ribose 1-diphosphate. Asp107 is a Mg(2+) binding site. Residues Asp110 and Ile153 each contribute to the guanine site. Xanthine is bound by residues Asp110 and Ile153. GMP-binding positions include 110–114 (DTGKT) and 152–153 (WI).

Belongs to the purine/pyrimidine phosphoribosyltransferase family. XGPT subfamily. In terms of assembly, homotetramer. Mg(2+) is required as a cofactor.

It localises to the cell inner membrane. It carries out the reaction GMP + diphosphate = guanine + 5-phospho-alpha-D-ribose 1-diphosphate. It catalyses the reaction XMP + diphosphate = xanthine + 5-phospho-alpha-D-ribose 1-diphosphate. The catalysed reaction is IMP + diphosphate = hypoxanthine + 5-phospho-alpha-D-ribose 1-diphosphate. It functions in the pathway purine metabolism; GMP biosynthesis via salvage pathway; GMP from guanine: step 1/1. Its pathway is purine metabolism; XMP biosynthesis via salvage pathway; XMP from xanthine: step 1/1. Purine salvage pathway enzyme that catalyzes the transfer of the ribosyl-5-phosphate group from 5-phospho-alpha-D-ribose 1-diphosphate (PRPP) to the N9 position of the 6-oxopurines guanine and xanthine to form the corresponding ribonucleotides GMP (guanosine 5'-monophosphate) and XMP (xanthosine 5'-monophosphate), with the release of PPi. To a lesser extent, also acts on hypoxanthine. The protein is Xanthine-guanine phosphoribosyltransferase of Rhodopseudomonas palustris (strain HaA2).